Reading from the N-terminus, the 668-residue chain is Bifunctional polymyxin resistance protein ArnA (668 aa).

The formyltransferase ArnAFT stretch occupies residues Met-1–Leu-307. Catalysis depends on His-106, which acts as the Proton donor; for formyltransferase activity. (6R)-10-formyltetrahydrofolate-binding positions include Arg-116 and Val-138 to Asp-142. Residues Arg-317–Cys-668 are dehydrogenase ArnADH. NAD(+) is bound by residues Asp-350 and Asp-371–Ile-372. UDP-alpha-D-glucuronate is bound by residues Ala-396, Tyr-401, and Thr-435–Ser-436. Glu-437 acts as the Proton acceptor; for decarboxylase activity in catalysis. UDP-alpha-D-glucuronate contacts are provided by residues Arg-463, Asn-494, Arg-528–Arg-537, and Tyr-615. Arg-621 acts as the Proton donor; for decarboxylase activity in catalysis.

This sequence in the N-terminal section; belongs to the Fmt family. UDP-L-Ara4N formyltransferase subfamily. In the C-terminal section; belongs to the NAD(P)-dependent epimerase/dehydratase family. UDP-glucuronic acid decarboxylase subfamily. As to quaternary structure, homohexamer, formed by a dimer of trimers.

The catalysed reaction is UDP-alpha-D-glucuronate + NAD(+) = UDP-beta-L-threo-pentopyranos-4-ulose + CO2 + NADH. It catalyses the reaction UDP-4-amino-4-deoxy-beta-L-arabinose + (6R)-10-formyltetrahydrofolate = UDP-4-deoxy-4-formamido-beta-L-arabinose + (6S)-5,6,7,8-tetrahydrofolate + H(+). Its pathway is nucleotide-sugar biosynthesis; UDP-4-deoxy-4-formamido-beta-L-arabinose biosynthesis; UDP-4-deoxy-4-formamido-beta-L-arabinose from UDP-alpha-D-glucuronate: step 1/3. It functions in the pathway nucleotide-sugar biosynthesis; UDP-4-deoxy-4-formamido-beta-L-arabinose biosynthesis; UDP-4-deoxy-4-formamido-beta-L-arabinose from UDP-alpha-D-glucuronate: step 3/3. The protein operates within bacterial outer membrane biogenesis; lipopolysaccharide biosynthesis. In terms of biological role, bifunctional enzyme that catalyzes the oxidative decarboxylation of UDP-glucuronic acid (UDP-GlcUA) to UDP-4-keto-arabinose (UDP-Ara4O) and the addition of a formyl group to UDP-4-amino-4-deoxy-L-arabinose (UDP-L-Ara4N) to form UDP-L-4-formamido-arabinose (UDP-L-Ara4FN). The modified arabinose is attached to lipid A and is required for resistance to polymyxin and cationic antimicrobial peptides. This Pseudomonas fluorescens (strain Pf0-1) protein is Bifunctional polymyxin resistance protein ArnA.